Here is a 280-residue protein sequence, read N- to C-terminus: Probable 2-(5''-triphosphoribosyl)-3'-dephosphocoenzyme-A synthase (280 aa).

It belongs to the CitG/MdcB family.

It catalyses the reaction 3'-dephospho-CoA + ATP = 2'-(5''-triphospho-alpha-D-ribosyl)-3'-dephospho-CoA + adenine. The protein is Probable 2-(5''-triphosphoribosyl)-3'-dephosphocoenzyme-A synthase of Lactiplantibacillus plantarum (strain ATCC BAA-793 / NCIMB 8826 / WCFS1) (Lactobacillus plantarum).